We begin with the raw amino-acid sequence, 461 residues long: Chromosomal replication initiator protein DnaA (461 aa).

Residues M1 to A84 form a domain I, interacts with DnaA modulators region. The interval A84–S124 is domain II. The tract at residues N125–A341 is domain III, AAA+ region. 4 residues coordinate ATP: G169, G171, K172, and T173. The interval N342–S461 is domain IV, binds dsDNA.

It belongs to the DnaA family. As to quaternary structure, oligomerizes as a right-handed, spiral filament on DNA at oriC.

The protein resides in the cytoplasm. Plays an essential role in the initiation and regulation of chromosomal replication. ATP-DnaA binds to the origin of replication (oriC) to initiate formation of the DNA replication initiation complex once per cell cycle. Binds the DnaA box (a 9 base pair repeat at the origin) and separates the double-stranded (ds)DNA. Forms a right-handed helical filament on oriC DNA; dsDNA binds to the exterior of the filament while single-stranded (ss)DNA is stabiized in the filament's interior. The ATP-DnaA-oriC complex binds and stabilizes one strand of the AT-rich DNA unwinding element (DUE), permitting loading of DNA polymerase. After initiation quickly degrades to an ADP-DnaA complex that is not apt for DNA replication. Binds acidic phospholipids. In Shewanella putrefaciens (strain CN-32 / ATCC BAA-453), this protein is Chromosomal replication initiator protein DnaA.